Here is a 180-residue protein sequence, read N- to C-terminus: CASP-like protein 2A3 (180 aa).

Residues 1–13 (MELIYGSTMRKKW) lie on the Cytoplasmic side of the membrane. The helical transmembrane segment at 14–34 (IEPALRFLPVGLCISALALML) threads the bilayer. Topologically, residues 35–55 (KSKEGNENGILEYKHVGAFRY) are extracellular. The chain crosses the membrane as a helical span at residues 56–76 (LAYANGICAAYSVLSTFNSVV). Over 77–85 (PRSCSLSRA) the chain is Cytoplasmic. A helical transmembrane segment spans residues 86 to 106 (WFVFVFDQAFTYLMLGAGAVV). Residues 107 to 135 (TEVLYLAYKGDEKITWFEICPYYGRFCNR) lie on the Extracellular side of the membrane. Residues 136 to 156 (VAASLVISFLALLCFIPLSLI) form a helical membrane-spanning segment. Topologically, residues 157–180 (SAYRVFSKYDPPSLCKKDQITSQS) are cytoplasmic.

The protein belongs to the Casparian strip membrane proteins (CASP) family. In terms of assembly, homodimer and heterodimers.

It is found in the cell membrane. This Picea sitchensis (Sitka spruce) protein is CASP-like protein 2A3.